The primary structure comprises 328 residues: Embigin (328 aa).

The first 33 residues, 1 to 33 (MRSHTGLRALVAPGCSLLLLYLLAATRPDRAVG), serve as a signal peptide directing secretion. The Extracellular segment spans residues 34-264 (DPADSAFTSL…VLSFMVPLKP (231 aa)). N-linked (GlcNAc...) asparagine glycosylation is found at Asn-55, Asn-62, Asn-75, Asn-100, Asn-117, Asn-189, Asn-196, Asn-214, and Asn-219. Ig-like domains are found at residues 67–160 (EQTR…RVPK) and 159–254 (PKVH…IKLV). Intrachain disulfides connect Cys-88/Cys-144 and Cys-180/Cys-238. Residues 265-285 (FLAIIAEVILLVAIILLCEVY) traverse the membrane as a helical segment. Topologically, residues 286 to 328 (TQKKKNDPDDGKEFEQIEQLKSDDSNGIENNVPRYRKTDSGDQ) are cytoplasmic. The segment covering 289 to 309 (KKNDPDDGKEFEQIEQLKSDD) has biased composition (basic and acidic residues). Positions 289–328 (KKNDPDDGKEFEQIEQLKSDDSNGIENNVPRYRKTDSGDQ) are disordered. A Phosphoserine modification is found at Ser-310.

In terms of assembly, interacts with SLC16A1, SLC16A6 and SLC16A7. Post-translationally, N-glycosylated. In terms of tissue distribution, detected in prostate, mammary gland and erythrocytes (at protein level). Detected in testis, brain, prostate, heart, kidney, liver, mammary gland and lung.

It is found in the cell membrane. The protein resides in the synapse. Functionally, plays a role in the outgrowth of motoneurons and in the formation of neuromuscular junctions. Following muscle denervation, promotes nerve terminal sprouting and the formation of additional acetylcholine receptor clusters at synaptic sites without affecting terminal Schwann cell number or morphology. Delays the retraction of terminal sprouts following re-innervation of denervated endplates. Plays a role in targeting the monocarboxylate transporters SLC16A1, SLC16A6 and SLC16A7 to the cell membrane. The sequence is that of Embigin (Emb) from Rattus norvegicus (Rat).